The following is a 224-amino-acid chain: Redox-sensing transcriptional repressor Rex (224 aa).

Positions 17–56 (RYHRCLEELLKNDIKRISSKELSERMGVTASQIRQDLNNF) form a DNA-binding region, H-T-H motif. NAD(+) is bound at residue 91 to 96 (GAGNLG).

The protein belongs to the transcriptional regulatory Rex family. In terms of assembly, homodimer.

It localises to the cytoplasm. Its function is as follows. Modulates transcription in response to changes in cellular NADH/NAD(+) redox state. The protein is Redox-sensing transcriptional repressor Rex of Caldanaerobacter subterraneus subsp. tengcongensis (strain DSM 15242 / JCM 11007 / NBRC 100824 / MB4) (Thermoanaerobacter tengcongensis).